The following is a 147-amino-acid chain: uncharacterized protein (147 aa).

4 consecutive transmembrane segments (helical) span residues 13-33 (LSLV…IIGL), 45-65 (LFVG…AYFL), 80-100 (YLFT…LILI), and 116-136 (WGFF…IIPY).

Its subcellular location is the cell membrane. This is an uncharacterized protein from Methanocaldococcus jannaschii (strain ATCC 43067 / DSM 2661 / JAL-1 / JCM 10045 / NBRC 100440) (Methanococcus jannaschii).